A 619-amino-acid polypeptide reads, in one-letter code: MLLQISEPGAGVKPQRRLAVGIDLGTTHSLVATVRDEQTVVLGDAQGRVLLPSVVRYLGAGAIEVGYEAKARQAEDPENTFVSVKRYMGRGLGDLASHHGAPYRFVEGEGMVQFDTRAGRISPVQVSAEILKVLRDRAVAELGGELAGAVITVPAYFDEAQRQATKDAAKLAGLEVFRLLNEPTAAAVAYGLDNAAEGVYAVYDLGGGTFDISVLKLTRGVFEVLATNGDPALGGDDFDRAVYDWLLAQSGLNGLSSSDASLLLTASRAAKERLSEQTEATVDTMLSDGSRIVATLSRDTFAELTAGLVKKTLTPVRKALRDAGLAIDDIKGVVLVGGATRMPCIREAVAEFFQQTPLTDLDPDKVVALGAAMQANLLAGNRAGGDWLLLDVIPLSLGIETLGGLCEKIVPRNTTIPVARAQEFTTWKDGQTAMSIHVVQGERELVSECRSLARFELRGIPPMAAGAARIRVTYQVDADGLLNVTAAEQTSGVEARIEVKPSYGLSDAEVARMIEDSYLHARDDLEARRLQEQKVEAARLIEATESALTEDGGLLTEQELEVLVKGLQVLKGAMEGSDWQAIKNAADALNEASTEFAGRRMDHSIKAALTGQKLESLGV.

Belongs to the heat shock protein 70 family.

In terms of biological role, chaperone involved in the maturation of iron-sulfur cluster-containing proteins. Has a low intrinsic ATPase activity which is markedly stimulated by HscB. This chain is Chaperone protein HscA homolog, found in Methylococcus capsulatus (strain ATCC 33009 / NCIMB 11132 / Bath).